Reading from the N-terminus, the 67-residue chain is Large ribosomal subunit protein bL35 (67 aa).

Belongs to the bacterial ribosomal protein bL35 family.

The polypeptide is Large ribosomal subunit protein bL35 (Rickettsia prowazekii (strain Madrid E)).